Consider the following 386-residue polypeptide: Inactive GDSL esterase/lipase-like protein 23 (386 aa).

Residues 1–29 (MMAKNCNLVSVLCVFLVLTLFNKPITVAG) form the signal peptide. Ser43 (nucleophile) is an active-site residue. Asn105, Asn165, and Asn288 each carry an N-linked (GlcNAc...) asparagine glycan. Active-site residues include Asp322 and His325.

Belongs to the 'GDSL' lipolytic enzyme family. In terms of assembly, part of the PYK10 complex. Interacts with MVP1. In terms of tissue distribution, expressed mainly in roots.

It is found in the endoplasmic reticulum. Involved in the control of the PYK10 complex size and possibly substrate specificity. May be exported from the endoplasmic reticulum upon interaction with MVP1. This is Inactive GDSL esterase/lipase-like protein 23 (GLL23) from Arabidopsis thaliana (Mouse-ear cress).